The primary structure comprises 360 residues: Phospho-N-acetylmuramoyl-pentapeptide-transferase (360 aa).

Residues 1 to 25 (MLVWLAEHLVKYYSGFNVFSYLTFR) are Periplasmic-facing. A helical membrane pass occupies residues 26 to 46 (AIVSLLTALFISLWMGPRMIA). Over 47 to 71 (RLQKLSFGQVVRNDGPESHFSKRGT) the chain is Cytoplasmic. A helical transmembrane segment spans residues 72–92 (PTMGGIMILTAIVISVLLWAY). A topological domain (periplasmic) is located at residue Pro-93. Residues 94–114 (SNPYVWCVLVVLIGYGIIGFV) traverse the membrane as a helical segment. Over 115–131 (DDYRKVVRKDTKGLIAR) the chain is Cytoplasmic. Residues 132-152 (WKYFWMSVIALGVAFALYLVG) form a helical membrane-spanning segment. The Periplasmic segment spans residues 153-167 (KDTPVTQLVVPFFKD). A helical membrane pass occupies residues 168-188 (VMPQLGLFYILLSYFVIVGTG). At 189–198 (NAVNLTDGLD) the chain is on the cytoplasmic side. A helical transmembrane segment spans residues 199 to 219 (GLAIMPTVFVAAGFALVAWAT). The Periplasmic segment spans residues 220–235 (GNMNFANYLHIPYLRH). Residues 236–256 (AGELVIVCTAIVGAGLGFLWF) traverse the membrane as a helical segment. Topologically, residues 257–262 (NTYPAQ) are cytoplasmic. The helical transmembrane segment at 263 to 283 (VFMGDVGSLALGGALGIIAVL) threads the bilayer. The Periplasmic segment spans residues 284-287 (LRQE). Residues 288-308 (FLLVIMGGVFVVETLSVILQV) traverse the membrane as a helical segment. Over 309–337 (GSFKLRGQRIFRMAPIHHHYELKGWPEPR) the chain is Cytoplasmic. The helical transmembrane segment at 338–358 (VIVRFWIISLMLVLIGLATLK) threads the bilayer. At 359-360 (VR) the chain is on the periplasmic side.

This sequence belongs to the glycosyltransferase 4 family. MraY subfamily. Mg(2+) serves as cofactor.

The protein resides in the cell inner membrane. The catalysed reaction is UDP-N-acetyl-alpha-D-muramoyl-L-alanyl-gamma-D-glutamyl-meso-2,6-diaminopimeloyl-D-alanyl-D-alanine + di-trans,octa-cis-undecaprenyl phosphate = di-trans,octa-cis-undecaprenyl diphospho-N-acetyl-alpha-D-muramoyl-L-alanyl-D-glutamyl-meso-2,6-diaminopimeloyl-D-alanyl-D-alanine + UMP. Its pathway is cell wall biogenesis; peptidoglycan biosynthesis. Catalyzes the initial step of the lipid cycle reactions in the biosynthesis of the cell wall peptidoglycan: transfers peptidoglycan precursor phospho-MurNAc-pentapeptide from UDP-MurNAc-pentapeptide onto the lipid carrier undecaprenyl phosphate, yielding undecaprenyl-pyrophosphoryl-MurNAc-pentapeptide, known as lipid I. The protein is Phospho-N-acetylmuramoyl-pentapeptide-transferase of Salmonella paratyphi C (strain RKS4594).